The chain runs to 242 residues: Purine nucleoside phosphorylase PA4543 (242 aa).

Positions 69, 103, and 120 each coordinate Zn(2+).

Belongs to the purine nucleoside phosphorylase YfiH/LACC1 family. Homodimer. Cu(2+) is required as a cofactor. Zn(2+) serves as cofactor.

It carries out the reaction adenosine + phosphate = alpha-D-ribose 1-phosphate + adenine. The catalysed reaction is S-methyl-5'-thioadenosine + phosphate = 5-(methylsulfanyl)-alpha-D-ribose 1-phosphate + adenine. The enzyme catalyses inosine + phosphate = alpha-D-ribose 1-phosphate + hypoxanthine. It catalyses the reaction adenosine + H2O + H(+) = inosine + NH4(+). In terms of biological role, purine nucleoside enzyme that catalyzes the phosphorolysis of adenosine and inosine nucleosides, yielding D-ribose 1-phosphate and the respective free bases, adenine and hypoxanthine. Also catalyzes the phosphorolysis of S-methyl-5'-thioadenosine into adenine and S-methyl-5-thio-alpha-D-ribose 1-phosphate. Also has adenosine deaminase activity. The chain is Purine nucleoside phosphorylase PA4543 from Pseudomonas aeruginosa (strain ATCC 15692 / DSM 22644 / CIP 104116 / JCM 14847 / LMG 12228 / 1C / PRS 101 / PAO1).